Here is a 239-residue protein sequence, read N- to C-terminus: Large ribosomal subunit protein uL2 (239 aa).

Residues His202–Gly239 are disordered. The segment covering Lys225 to Gly239 has biased composition (basic residues).

It belongs to the universal ribosomal protein uL2 family. As to quaternary structure, part of the 50S ribosomal subunit. Forms a bridge to the 30S subunit in the 70S ribosome.

In terms of biological role, one of the primary rRNA binding proteins. Required for association of the 30S and 50S subunits to form the 70S ribosome, for tRNA binding and peptide bond formation. It has been suggested to have peptidyltransferase activity; this is somewhat controversial. Makes several contacts with the 16S rRNA in the 70S ribosome. The chain is Large ribosomal subunit protein uL2 from Desulfurococcus amylolyticus (strain DSM 18924 / JCM 16383 / VKM B-2413 / 1221n) (Desulfurococcus kamchatkensis).